Here is a 157-residue protein sequence, read N- to C-terminus: Small ribosomal subunit protein uS7 (157 aa).

This sequence belongs to the universal ribosomal protein uS7 family. As to quaternary structure, part of the 30S ribosomal subunit. Contacts proteins S9 and S11.

One of the primary rRNA binding proteins, it binds directly to 16S rRNA where it nucleates assembly of the head domain of the 30S subunit. Is located at the subunit interface close to the decoding center, probably blocks exit of the E-site tRNA. This is Small ribosomal subunit protein uS7 from Psychrobacter sp. (strain PRwf-1).